A 379-amino-acid polypeptide reads, in one-letter code: 1-deoxy-D-xylulose 5-phosphate reductoisomerase (379 aa).

Residues threonine 10, glycine 11, serine 12, isoleucine 13, glycine 36, asparagine 38, and asparagine 121 each coordinate NADPH. Lysine 122 provides a ligand contact to 1-deoxy-D-xylulose 5-phosphate. Glutamate 123 contributes to the NADPH binding site. Residue aspartate 147 coordinates Mn(2+). 1-deoxy-D-xylulose 5-phosphate is bound by residues serine 148, glutamate 149, serine 173, and histidine 196. Residue glutamate 149 coordinates Mn(2+). Glycine 202 contributes to the NADPH binding site. 1-deoxy-D-xylulose 5-phosphate contacts are provided by serine 209, asparagine 214, lysine 215, and glutamate 218. Residue glutamate 218 participates in Mn(2+) binding.

It belongs to the DXR family. It depends on Mg(2+) as a cofactor. Mn(2+) serves as cofactor.

The catalysed reaction is 2-C-methyl-D-erythritol 4-phosphate + NADP(+) = 1-deoxy-D-xylulose 5-phosphate + NADPH + H(+). It functions in the pathway isoprenoid biosynthesis; isopentenyl diphosphate biosynthesis via DXP pathway; isopentenyl diphosphate from 1-deoxy-D-xylulose 5-phosphate: step 1/6. Functionally, catalyzes the NADPH-dependent rearrangement and reduction of 1-deoxy-D-xylulose-5-phosphate (DXP) to 2-C-methyl-D-erythritol 4-phosphate (MEP). In Shouchella clausii (strain KSM-K16) (Alkalihalobacillus clausii), this protein is 1-deoxy-D-xylulose 5-phosphate reductoisomerase.